A 98-amino-acid chain; its full sequence is Ferredoxin-like protein (98 aa).

This sequence to ferredoxins from P.putida and C.tartarivorum, ferredoxin I from A.vinelandii, ferredoxin II from D.desulfuricans.

Could be a 3Fe-4S cluster-containing protein. This chain is Ferredoxin-like protein (fixX), found in Rhizobium leguminosarum bv. trifolii.